We begin with the raw amino-acid sequence, 198 residues long: Cytochrome c oxidase subunit 2 (198 aa).

Residues 1–13 form a helical membrane-spanning segment; that stretch reads AICSLVLYLLTLM. The Mitochondrial matrix portion of the chain corresponds to 14–26; the sequence is LMEKLSSNTVDAQ. Residues 27 to 54 traverse the membrane as a helical segment; it reads EVELIWTILPAIVLILLALPSLQILYMM. Over 55-198 the chain is Mitochondrial intermembrane; sequence DEIDEPDLTL…WSSLLSTSSL (144 aa). Positions 128, 163, 165, 167, 171, and 174 each coordinate Cu cation. E165 contacts Mg(2+).

This sequence belongs to the cytochrome c oxidase subunit 2 family. As to quaternary structure, component of the cytochrome c oxidase (complex IV, CIV), a multisubunit enzyme composed of 14 subunits. The complex is composed of a catalytic core of 3 subunits MT-CO1, MT-CO2 and MT-CO3, encoded in the mitochondrial DNA, and 11 supernumerary subunits COX4I, COX5A, COX5B, COX6A, COX6B, COX6C, COX7A, COX7B, COX7C, COX8 and NDUFA4, which are encoded in the nuclear genome. The complex exists as a monomer or a dimer and forms supercomplexes (SCs) in the inner mitochondrial membrane with NADH-ubiquinone oxidoreductase (complex I, CI) and ubiquinol-cytochrome c oxidoreductase (cytochrome b-c1 complex, complex III, CIII), resulting in different assemblies (supercomplex SCI(1)III(2)IV(1) and megacomplex MCI(2)III(2)IV(2)). Found in a complex with TMEM177, COA6, COX18, COX20, SCO1 and SCO2. Interacts with TMEM177 in a COX20-dependent manner. Interacts with COX20. Interacts with COX16. Cu cation is required as a cofactor.

Its subcellular location is the mitochondrion inner membrane. It catalyses the reaction 4 Fe(II)-[cytochrome c] + O2 + 8 H(+)(in) = 4 Fe(III)-[cytochrome c] + 2 H2O + 4 H(+)(out). Component of the cytochrome c oxidase, the last enzyme in the mitochondrial electron transport chain which drives oxidative phosphorylation. The respiratory chain contains 3 multisubunit complexes succinate dehydrogenase (complex II, CII), ubiquinol-cytochrome c oxidoreductase (cytochrome b-c1 complex, complex III, CIII) and cytochrome c oxidase (complex IV, CIV), that cooperate to transfer electrons derived from NADH and succinate to molecular oxygen, creating an electrochemical gradient over the inner membrane that drives transmembrane transport and the ATP synthase. Cytochrome c oxidase is the component of the respiratory chain that catalyzes the reduction of oxygen to water. Electrons originating from reduced cytochrome c in the intermembrane space (IMS) are transferred via the dinuclear copper A center (CU(A)) of subunit 2 and heme A of subunit 1 to the active site in subunit 1, a binuclear center (BNC) formed by heme A3 and copper B (CU(B)). The BNC reduces molecular oxygen to 2 water molecules using 4 electrons from cytochrome c in the IMS and 4 protons from the mitochondrial matrix. The chain is Cytochrome c oxidase subunit 2 (MT-CO2) from Tinamus major (Great tinamou).